We begin with the raw amino-acid sequence, 428 residues long: Chaperone SurA (428 aa).

The first 20 residues, 1 to 20 (MKNWKTLLLGIAMIANTSFA), serve as a signal peptide directing secretion. 2 PpiC domains span residues 171–272 (STEL…KVND) and 282–382 (VTEV…ELLD).

Its subcellular location is the periplasm. It catalyses the reaction [protein]-peptidylproline (omega=180) = [protein]-peptidylproline (omega=0). Functionally, chaperone involved in the correct folding and assembly of outer membrane proteins. Recognizes specific patterns of aromatic residues and the orientation of their side chains, which are found more frequently in integral outer membrane proteins. May act in both early periplasmic and late outer membrane-associated steps of protein maturation. The sequence is that of Chaperone SurA from Shigella dysenteriae serotype 1 (strain Sd197).